A 120-amino-acid chain; its full sequence is U-scoloptoxin(16)-Er2a (120 aa).

A signal peptide spans 1-26 (MNTVSVVQFLAVGCAVFVLYGRGVFA).

This sequence belongs to the scoloptoxin-16 family. Contains 4 disulfide bonds. As to expression, expressed by the venom gland.

Its subcellular location is the secreted. The sequence is that of U-scoloptoxin(16)-Er2a from Ethmostigmus rubripes (Giant centipede).